The following is a 296-amino-acid chain: 4-hydroxy-tetrahydrodipicolinate synthase (296 aa).

T47 is a pyruvate binding site. The active-site Proton donor/acceptor is the Y135. K163 serves as the catalytic Schiff-base intermediate with substrate. I205 lines the pyruvate pocket.

Belongs to the DapA family. In terms of assembly, homotetramer; dimer of dimers.

It is found in the cytoplasm. It carries out the reaction L-aspartate 4-semialdehyde + pyruvate = (2S,4S)-4-hydroxy-2,3,4,5-tetrahydrodipicolinate + H2O + H(+). Its pathway is amino-acid biosynthesis; L-lysine biosynthesis via DAP pathway; (S)-tetrahydrodipicolinate from L-aspartate: step 3/4. In terms of biological role, catalyzes the condensation of (S)-aspartate-beta-semialdehyde [(S)-ASA] and pyruvate to 4-hydroxy-tetrahydrodipicolinate (HTPA). The sequence is that of 4-hydroxy-tetrahydrodipicolinate synthase from Macrococcus caseolyticus (strain JCSC5402) (Macrococcoides caseolyticum).